Consider the following 64-residue polypeptide: Disintegrin VA6 (64 aa).

Positions 1–64 (NSANPCCDPV…SDCPRNPYKS (64 aa)) constitute a Disintegrin domain. 4 disulfide bridges follow: Cys6/Cys29, Cys20/Cys26, Cys25/Cys50, and Cys38/Cys57. The short motif at 42-44 (RGD) is the Cell attachment site element.

It belongs to the venom metalloproteinase (M12B) family. P-II subfamily. P-IId sub-subfamily. In terms of assembly, homodimer; disulfide-linked. Expressed by the venom gland.

It is found in the secreted. In terms of biological role, poor inhibitor of platelet aggregation. The disintegrin inhibits the adhesion of cells expressing the RGD-dependent integrin alpha-5/beta-1 (ITGA5/ITGB1) to immobilized fibronectin. Inhibition on alpha-IIb/beta-3 (ITGA2B/ITGB3) is low, and there is no inhibition on alpha-1/beta-1 (ITGA1/ITGB1), alpha-2/beta-1 (ITGA2/ITGB1) and alpha-6/beta-1 (ITGA6/ITGB1). The protein is Disintegrin VA6 of Vipera ammodytes ammodytes (Western sand viper).